The chain runs to 20 residues: Cytotoxin drCT-1 (20 aa).

The protein belongs to the three-finger toxin family. Short-chain subfamily. Type IA cytotoxin sub-subfamily. In terms of assembly, monomer in solution; Homodimer and oligomer in the presence of negatively charged lipids forming a pore with a size ranging between 20 and 30 Angstroms. In terms of tissue distribution, expressed by the venom gland.

It is found in the secreted. It localises to the target cell membrane. This three-finger cytotoxin has antiproliferative, cytotoxic and apoptotic activities. Both in vivo and in vitro experimental results suggests that this protein possess anticancer potential. Also shows neurotoxicity, cardiotoxicity and myotoxicity. In Daboia russelii (Russel's viper), this protein is Cytotoxin drCT-1.